The following is a 131-amino-acid chain: Ribosome-binding factor A (131 aa).

It belongs to the RbfA family. As to quaternary structure, monomer. Binds 30S ribosomal subunits, but not 50S ribosomal subunits or 70S ribosomes.

Its subcellular location is the cytoplasm. Functionally, one of several proteins that assist in the late maturation steps of the functional core of the 30S ribosomal subunit. Associates with free 30S ribosomal subunits (but not with 30S subunits that are part of 70S ribosomes or polysomes). Required for efficient processing of 16S rRNA. May interact with the 5'-terminal helix region of 16S rRNA. This is Ribosome-binding factor A from Gloeothece citriformis (strain PCC 7424) (Cyanothece sp. (strain PCC 7424)).